Reading from the N-terminus, the 222-residue chain is uncharacterized protein (222 aa).

A disordered region spans residues 142–222; that stretch reads ARRGGCVHPP…LPDPPSAGHL (81 aa). Over residues 160–169 the composition is skewed to low complexity; sequence QSRSISSRRA. Over residues 182–196 the composition is skewed to basic residues; that stretch reads PRRRPHRHRTRPQTR.

It belongs to the Rv1128c/1148c/1588c/1702c/1945/3466 family.

This is an uncharacterized protein from Mycobacterium tuberculosis (strain CDC 1551 / Oshkosh).